A 380-amino-acid polypeptide reads, in one-letter code: MTVIRKKHPLIKIINHSFIDLPAPSNISSWWNFGSLLGLCLIVQILTGLFLAMHYTSDTATAFSSVAHICRDVNYGWLIRYMHANGASMFFICLFLHVGRGVYYGSYNMIETWNMGIVLLFAVMATAFMGYVLPWGQMSFWGATVITNLLSAIPYIGTTLVEWIWGGFSVDKATLTRFFAFHFILPFIITALVLVHLLFLHETGSNNPTGLNSDADKIPFHPYYTVKDFLGVLILLMAFMILTLFFPDILGDPDNYTPANPLNTPPHIKPEWYFLFAYAILRSIPNKLGGVLALILSIVILAFMPLLHTSKQRALTFRPITQTMYWILVADLLVLTWIGGQPVEYPFIIIGQTASIAYFTIIVIFMPIAGMIENDIMDLD.

4 consecutive transmembrane segments (helical) span residues 33 to 53 (FGSL…FLAM), 77 to 98 (WLIR…FLHV), 113 to 133 (WNMG…GYVL), and 178 to 198 (FFAF…VHLL). Residues H83 and H97 each contribute to the heme site. Residues H182 and H196 each coordinate heme. H201 is a binding site for a ubiquinone. The next 4 helical transmembrane spans lie at 226–246 (VKDF…TLFF), 288–308 (LGGV…PLLH), 320–340 (ITQT…WIGG), and 347–367 (FIII…IFMP).

This sequence belongs to the cytochrome b family. As to quaternary structure, the cytochrome bc1 complex contains 11 subunits: 3 respiratory subunits (MT-CYB, CYC1 and UQCRFS1), 2 core proteins (UQCRC1 and UQCRC2) and 6 low-molecular weight proteins (UQCRH/QCR6, UQCRB/QCR7, UQCRQ/QCR8, UQCR10/QCR9, UQCR11/QCR10 and a cleavage product of UQCRFS1). This cytochrome bc1 complex then forms a dimer. Requires heme as cofactor.

It is found in the mitochondrion inner membrane. Component of the ubiquinol-cytochrome c reductase complex (complex III or cytochrome b-c1 complex) that is part of the mitochondrial respiratory chain. The b-c1 complex mediates electron transfer from ubiquinol to cytochrome c. Contributes to the generation of a proton gradient across the mitochondrial membrane that is then used for ATP synthesis. The protein is Cytochrome b (MT-CYB) of Microtus arvalis (Common vole).